We begin with the raw amino-acid sequence, 66 residues long: Large ribosomal subunit protein bL32 (66 aa).

This sequence belongs to the bacterial ribosomal protein bL32 family.

This Rickettsia akari (strain Hartford) protein is Large ribosomal subunit protein bL32.